Reading from the N-terminus, the 395-residue chain is VEAAHLKTDIMSVFDDLTQDDQDSFRFLAVEGCAALGKLLEPQDCLAHILPVIVNFSQDKSWRVRYMVANQLYELCEAVGPDSTKTELVPAYVRLLRDNVAEVRIAAAGKVSKFSRILSPELAIQHILPCVKELSTDSSQHVRSALASVIMGMAPVLGKDATIEQLLPIFLSLLKDEFPDVRLNIISKLDQVNQVIGIDLLSQSLLPAIVELAEDRHWRVRLAIIEYIPLLASQLGVGFFDDKLGALIMQWLKDKEYSIRNAAANNVKRLAAEEFGPEWAMQHIIPQVLDMINDPHYLYRMTILHAISLLAPVLGSEITSTNLLPLVVNASKDRVPNIKFNVAKVLQSLIPIVDESVVESTIRPCLVELSEDPDVDVRFFASQALQSSDQVKMSS.

HEAT repeat units follow at residues Asp-44–Pro-81, Ser-83–Pro-120, Leu-122–Lys-159, Ala-161–Ile-198, Leu-200–Val-237, Phe-239–Gly-276, Trp-279–Ser-316, and Ile-318–Glu-355.

It belongs to the phosphatase 2A regulatory subunit A family. PP2A exists in several trimeric forms, all of which consist of a core composed of a catalytic subunit associated with a 65 kDa regulatory subunit (PR65) (subunit A). The core complex associates with a third, variable subunit (subunit B), which confers distinct properties to the holoenzyme.

The PR65 subunit of protein phosphatase 2A serves as a scaffolding molecule to coordinate the assembly of the catalytic subunit and a variable regulatory B subunit. The sequence is that of Protein phosphatase PP2A regulatory subunit A from Pisum sativum (Garden pea).